We begin with the raw amino-acid sequence, 327 residues long: MSERHLPDDQSSTIDPYLITSVRQTLAEQSAALQNLSKQLDSGQYQRVLNLIMNCKGHVILSGMGKSGHVGRKISATLASTGTPSFFIHPAEAFHGDLGMITPYDLLILISASGETDEILKLVPSLKNFGNRIIAITNNGNSTLAKNADAVLELHMANETCPNNLAPTTSTTLTMAIGDALAIAMIHQRKFMPNDFARYHPGGSLGRRLLTRVADVMQHDVPAVQLDASFKTVIQRITSGCQGMVMVEDAEGGLAGIITDGDLRRFMEKEGSLTSATAAQMMTREPLTLPEDTMIIEAEEKMQKHRVSTLLVTNKANKVTGLVRIFD.

Residues 48–191 (VLNLIMNCKG…AIAMIHQRKF (144 aa)) form the SIS domain. 63–68 (GMGKSG) serves as a coordination point for ATP. Substrate-binding positions include 82-83 (GT), H89, H95, 121-130 (KLVPSLKNFG), and 155-157 (HMA). Zn(2+) is bound at residue H89. CBS domains follow at residues 217-273 (MQHD…EGSL) and 282-327 (MTRE…RIFD).

In terms of assembly, homotetramer.

It carries out the reaction D-arabinose 5-phosphate = D-ribulose 5-phosphate. With respect to regulation, inhibited by 10 uM zinc, cadmium or mercury ions. Functionally, involved in the biosynthesis of K-antigen capsules. Catalyzes the reversible aldol-ketol isomerization between D-ribulose 5-phosphate (Ru5P) and D-arabinose 5-phosphate (A5P). The protein is Arabinose 5-phosphate isomerase KpsF of Escherichia coli O6:H1 (strain CFT073 / ATCC 700928 / UPEC).